Here is an 88-residue protein sequence, read N- to C-terminus: Large ribosomal subunit protein bL31B (88 aa).

Belongs to the bacterial ribosomal protein bL31 family. Type B subfamily. As to quaternary structure, part of the 50S ribosomal subunit.

This Glaesserella parasuis serovar 5 (strain SH0165) (Haemophilus parasuis) protein is Large ribosomal subunit protein bL31B.